The sequence spans 362 residues: MTQEGKRILVMAGGTGGHVFPALAVAKYLAQQGWQVRWLGTADRMEARLVPQYGFDIDFIDIKGVRGNGLVRKLAAPFKVIRSILQAKAVIAEFKPDVVLGMGGFASGPGGVAARLAGIPLVLHEQNAIPGMTNKLLSRIATQVLCAFKNTFTTVKSKVVGNPIRRELIALGAEPKPLADDALKVLVVGGSLGAKIFNDLMPSVVAALSKQQSITVWHQVGKDNLAGVKAAYQQQGQEGGVNIAEFIDDMEAAYRWADVVLCRAGALTVSELAAVGLPSILVPYPHAVDDHQTRNGQVLVEAGAAFLLPQAILDVDKLVGKLQLLANDRTELARMGQRARDVAVLDATEQVAAVCISLAEKG.

Residues 15-17, asparagine 127, arginine 165, serine 191, isoleucine 247, 266-271, and glutamine 292 contribute to the UDP-N-acetyl-alpha-D-glucosamine site; these read TGG and ALTVSE.

Belongs to the glycosyltransferase 28 family. MurG subfamily.

It is found in the cell inner membrane. It carries out the reaction di-trans,octa-cis-undecaprenyl diphospho-N-acetyl-alpha-D-muramoyl-L-alanyl-D-glutamyl-meso-2,6-diaminopimeloyl-D-alanyl-D-alanine + UDP-N-acetyl-alpha-D-glucosamine = di-trans,octa-cis-undecaprenyl diphospho-[N-acetyl-alpha-D-glucosaminyl-(1-&gt;4)]-N-acetyl-alpha-D-muramoyl-L-alanyl-D-glutamyl-meso-2,6-diaminopimeloyl-D-alanyl-D-alanine + UDP + H(+). Its pathway is cell wall biogenesis; peptidoglycan biosynthesis. Its function is as follows. Cell wall formation. Catalyzes the transfer of a GlcNAc subunit on undecaprenyl-pyrophosphoryl-MurNAc-pentapeptide (lipid intermediate I) to form undecaprenyl-pyrophosphoryl-MurNAc-(pentapeptide)GlcNAc (lipid intermediate II). This chain is UDP-N-acetylglucosamine--N-acetylmuramyl-(pentapeptide) pyrophosphoryl-undecaprenol N-acetylglucosamine transferase, found in Shewanella putrefaciens (strain CN-32 / ATCC BAA-453).